The chain runs to 383 residues: Putative F-box/kelch-repeat protein At1g62270 (383 aa).

The F-box domain occupies 6–51 (TSSFSSLPWDLVEDILARVPATSLKRLRSTCKQWNFLFNDQIFTKM). Kelch repeat units follow at residues 110–158 (KVFH…YGNY), 160–211 (SCYN…LRGN), and 349–383 (TVYI…LVQI).

This is Putative F-box/kelch-repeat protein At1g62270 from Arabidopsis thaliana (Mouse-ear cress).